Consider the following 440-residue polypeptide: Trigger factor (440 aa).

In terms of domain architecture, PPIase FKBP-type spans 163–248 (GDTVVIDFKG…VHEVKTKELP (86 aa)).

It belongs to the FKBP-type PPIase family. Tig subfamily.

The protein localises to the cytoplasm. The catalysed reaction is [protein]-peptidylproline (omega=180) = [protein]-peptidylproline (omega=0). Functionally, involved in protein export. Acts as a chaperone by maintaining the newly synthesized protein in an open conformation. Functions as a peptidyl-prolyl cis-trans isomerase. In Lactiplantibacillus plantarum (strain ATCC BAA-793 / NCIMB 8826 / WCFS1) (Lactobacillus plantarum), this protein is Trigger factor.